The sequence spans 199 residues: UPF0301 protein Daci_1578 (199 aa).

The protein belongs to the UPF0301 (AlgH) family.

This is UPF0301 protein Daci_1578 from Delftia acidovorans (strain DSM 14801 / SPH-1).